The primary structure comprises 226 residues: Probable functional amyloid protease FapD (226 aa).

A signal peptide spans M1–A18. The 131-residue stretch at Q50 to V180 folds into the Peptidase C39 domain. C56 is an active-site residue.

The protein belongs to the FapD family.

The protein localises to the periplasm. Probable cysteine protease that is involved in processing fibril precursors. Upon overexpression of the endogenous six-gene locus (fapA-fapF) in situ, cells form large clumps during liquid growth, make large amounts of biofilm and produce amyloid fibrils. Expression of the 6 gene operon in E.coli strain BL21(DE3) induces flocculation and biofilm formation with copious extracellular fibrils. This is Probable functional amyloid protease FapD from Pseudomonas fluorescens.